We begin with the raw amino-acid sequence, 423 residues long: Gamma-glutamyl phosphate reductase (423 aa).

The protein belongs to the gamma-glutamyl phosphate reductase family.

The protein resides in the cytoplasm. It carries out the reaction L-glutamate 5-semialdehyde + phosphate + NADP(+) = L-glutamyl 5-phosphate + NADPH + H(+). It participates in amino-acid biosynthesis; L-proline biosynthesis; L-glutamate 5-semialdehyde from L-glutamate: step 2/2. Catalyzes the NADPH-dependent reduction of L-glutamate 5-phosphate into L-glutamate 5-semialdehyde and phosphate. The product spontaneously undergoes cyclization to form 1-pyrroline-5-carboxylate. In Burkholderia ambifaria (strain MC40-6), this protein is Gamma-glutamyl phosphate reductase.